The primary structure comprises 295 residues: Glycine--tRNA ligase alpha subunit (295 aa).

It belongs to the class-II aminoacyl-tRNA synthetase family. As to quaternary structure, tetramer of two alpha and two beta subunits.

Its subcellular location is the cytoplasm. The catalysed reaction is tRNA(Gly) + glycine + ATP = glycyl-tRNA(Gly) + AMP + diphosphate. This Bacillus licheniformis (strain ATCC 14580 / DSM 13 / JCM 2505 / CCUG 7422 / NBRC 12200 / NCIMB 9375 / NCTC 10341 / NRRL NRS-1264 / Gibson 46) protein is Glycine--tRNA ligase alpha subunit.